A 155-amino-acid polypeptide reads, in one-letter code: Protein PtsT (155 aa).

The sequence is that of Protein PtsT (ptsT) from Geobacillus stearothermophilus (Bacillus stearothermophilus).